We begin with the raw amino-acid sequence, 302 residues long: Acetylglutamate kinase (302 aa).

Substrate-binding positions include 67-68, Arg89, and Asn194; that span reads GG.

The protein belongs to the acetylglutamate kinase family. ArgB subfamily.

The protein localises to the cytoplasm. It carries out the reaction N-acetyl-L-glutamate + ATP = N-acetyl-L-glutamyl 5-phosphate + ADP. Its pathway is amino-acid biosynthesis; L-arginine biosynthesis; N(2)-acetyl-L-ornithine from L-glutamate: step 2/4. Catalyzes the ATP-dependent phosphorylation of N-acetyl-L-glutamate. This chain is Acetylglutamate kinase, found in Hahella chejuensis (strain KCTC 2396).